Reading from the N-terminus, the 491-residue chain is Peptidoglycan D,D-transpeptidase PbpA (491 aa).

The Cytoplasmic segment spans residues 1–7 (MNASLRR). A helical; Signal-anchor for type II membrane protein transmembrane segment spans residues 8–28 (ISVTVMALIVLLLLNATMTQV). The Periplasmic portion of the chain corresponds to 29–491 (FTADGLRADP…VIEAALQGEP (463 aa)). Residues 160–484 (GAVVALEPST…AAPIGRAVIE (325 aa)) are transpeptidase. The Acyl-ester intermediate role is filled by serine 222.

This sequence belongs to the transpeptidase family.

It is found in the cell inner membrane. The enzyme catalyses Preferential cleavage: (Ac)2-L-Lys-D-Ala-|-D-Ala. Also transpeptidation of peptidyl-alanyl moieties that are N-acyl substituents of D-alanine.. Its pathway is cell wall biogenesis; peptidoglycan biosynthesis. In terms of biological role, transpeptidase that catalyzes cross-linking of the peptidoglycan cell wall. Required for the regulation of cell length. The sequence is that of Peptidoglycan D,D-transpeptidase PbpA (pbpA) from Mycobacterium tuberculosis (strain CDC 1551 / Oshkosh).